Here is a 204-residue protein sequence, read N- to C-terminus: Spermatogenesis-associated protein 46 (204 aa).

Residues 101–120 (SSSSQENTYPREANRKSKHG) form a disordered region.

Testis-specific.

The protein localises to the nucleus membrane. Plays a role in spermiogenesis and fertilization. This chain is Spermatogenesis-associated protein 46 (Spata46), found in Mus musculus (Mouse).